We begin with the raw amino-acid sequence, 289 residues long: Energy-coupling factor transporter ATP-binding protein EcfA2 (289 aa).

The ABC transporter domain maps to 3 to 246; that stretch reads IRFKQVDFTY…TQWLKEKQLG (244 aa). 40–47 is an ATP binding site; it reads GHTGSGKS.

It belongs to the ABC transporter superfamily. Energy-coupling factor EcfA family. As to quaternary structure, forms a stable energy-coupling factor (ECF) transporter complex composed of 2 membrane-embedded substrate-binding proteins (S component), 2 ATP-binding proteins (A component) and 2 transmembrane proteins (T component).

The protein localises to the cell membrane. Functionally, ATP-binding (A) component of a common energy-coupling factor (ECF) ABC-transporter complex. Unlike classic ABC transporters this ECF transporter provides the energy necessary to transport a number of different substrates. The polypeptide is Energy-coupling factor transporter ATP-binding protein EcfA2 (Enterococcus faecalis (strain ATCC 700802 / V583)).